A 435-amino-acid chain; its full sequence is Serine--tRNA ligase (435 aa).

L-serine is bound at residue 242–244 (TAE). 273–275 (RSE) contributes to the ATP binding site. L-serine is bound at residue glutamate 296. 360-363 (EISS) serves as a coordination point for ATP. L-serine is bound at residue serine 396.

It belongs to the class-II aminoacyl-tRNA synthetase family. Type-1 seryl-tRNA synthetase subfamily. Homodimer. The tRNA molecule binds across the dimer.

It localises to the cytoplasm. It catalyses the reaction tRNA(Ser) + L-serine + ATP = L-seryl-tRNA(Ser) + AMP + diphosphate + H(+). It carries out the reaction tRNA(Sec) + L-serine + ATP = L-seryl-tRNA(Sec) + AMP + diphosphate + H(+). Its pathway is aminoacyl-tRNA biosynthesis; selenocysteinyl-tRNA(Sec) biosynthesis; L-seryl-tRNA(Sec) from L-serine and tRNA(Sec): step 1/1. In terms of biological role, catalyzes the attachment of serine to tRNA(Ser). Is also able to aminoacylate tRNA(Sec) with serine, to form the misacylated tRNA L-seryl-tRNA(Sec), which will be further converted into selenocysteinyl-tRNA(Sec). This is Serine--tRNA ligase from Vibrio campbellii (strain ATCC BAA-1116).